Reading from the N-terminus, the 89-residue chain is Small ribosomal subunit protein uS15 (89 aa).

Belongs to the universal ribosomal protein uS15 family. As to quaternary structure, part of the 30S ribosomal subunit. Forms a bridge to the 50S subunit in the 70S ribosome, contacting the 23S rRNA.

Functionally, one of the primary rRNA binding proteins, it binds directly to 16S rRNA where it helps nucleate assembly of the platform of the 30S subunit by binding and bridging several RNA helices of the 16S rRNA. In terms of biological role, forms an intersubunit bridge (bridge B4) with the 23S rRNA of the 50S subunit in the ribosome. In Burkholderia ambifaria (strain MC40-6), this protein is Small ribosomal subunit protein uS15.